The following is a 330-amino-acid chain: Virulence plasmid integrase pGP8-D (330 aa).

Residues 39–124 (FSLFEVIMHW…SYISLTRFLN (86 aa)) enclose the Core-binding (CB) domain. In terms of domain architecture, Tyr recombinase spans 152–327 (VKTNAMNRLQ…SREDNASKKM (176 aa)). Residues R189, K214, H279, R282, and H305 contribute to the active site. Catalysis depends on Y314, which acts as the O-(3'-phospho-DNA)-tyrosine intermediate.

This sequence belongs to the 'phage' integrase family.

In Chlamydia muridarum (strain MoPn / Nigg), this protein is Virulence plasmid integrase pGP8-D.